We begin with the raw amino-acid sequence, 153 residues long: Putative nuclear shuttle protein (153 aa).

The protein belongs to the nanoviridae nuclear shuttle protein family.

The protein resides in the host nucleus. The protein localises to the host cytoplasm. Its function is as follows. Putative nuclear shuttle protein. The polypeptide is Putative nuclear shuttle protein (DNA-N) (Cicer arietinum (Chickpea)).